The primary structure comprises 156 residues: Small ribosomal subunit protein uS7 (156 aa).

It belongs to the universal ribosomal protein uS7 family. Part of the 30S ribosomal subunit. Contacts proteins S9 and S11.

One of the primary rRNA binding proteins, it binds directly to 16S rRNA where it nucleates assembly of the head domain of the 30S subunit. Is located at the subunit interface close to the decoding center, probably blocks exit of the E-site tRNA. This Bordetella bronchiseptica (strain ATCC BAA-588 / NCTC 13252 / RB50) (Alcaligenes bronchisepticus) protein is Small ribosomal subunit protein uS7.